Reading from the N-terminus, the 316-residue chain is MSTVQVPKLNTKDLLTLEELTKEEIISLIEFAIYLKKNKQEPLLQGKILGLIFDKHSTRTRVSFEAGMVQLGGHGMFLSGKEMQMGRGETVSDTAKVLSQYIDGIMIRTFSHADVEELAKESSIPVINGLTDDHHPCQALADLMTIYEETNTFKGIKLAYVGDGNNVCHSLLLASAKVGMHMTVATPVGYEPNEEIVKKALAIAKETGAEIEVLHDPELAVNEADFIYTDVWMSMGQEGEEEKYSLFQPYQINNELVKHAKQTYRFLHCLPAHREEEVTGKIIDGPQSIVFEQAGNRLHAQKALLVSLFKNVEEPS.

Residues 57 to 60 (STRT), Q84, R108, and 135 to 138 (HPCQ) contribute to the carbamoyl phosphate site. L-ornithine contacts are provided by residues N166, D230, and 234 to 235 (SM). Residues 269-270 (CL) and R297 each bind carbamoyl phosphate.

The protein belongs to the aspartate/ornithine carbamoyltransferase superfamily. OTCase family.

The protein localises to the cytoplasm. The catalysed reaction is carbamoyl phosphate + L-ornithine = L-citrulline + phosphate + H(+). The protein operates within amino-acid biosynthesis; L-arginine biosynthesis; L-arginine from L-ornithine and carbamoyl phosphate: step 1/3. Reversibly catalyzes the transfer of the carbamoyl group from carbamoyl phosphate (CP) to the N(epsilon) atom of ornithine (ORN) to produce L-citrulline. This Bacillus cereus (strain ATCC 14579 / DSM 31 / CCUG 7414 / JCM 2152 / NBRC 15305 / NCIMB 9373 / NCTC 2599 / NRRL B-3711) protein is Ornithine carbamoyltransferase (argF).